The sequence spans 491 residues: Probable glycogen synthase 2 (491 aa).

Residue K15 participates in ADP-alpha-D-glucose binding.

Belongs to the glycosyltransferase 1 family. Bacterial/plant glycogen synthase subfamily.

It catalyses the reaction [(1-&gt;4)-alpha-D-glucosyl](n) + ADP-alpha-D-glucose = [(1-&gt;4)-alpha-D-glucosyl](n+1) + ADP + H(+). It functions in the pathway glycan biosynthesis; glycogen biosynthesis. Synthesizes alpha-1,4-glucan chains using ADP-glucose. The polypeptide is Probable glycogen synthase 2 (glgA2) (Synechocystis sp. (strain ATCC 27184 / PCC 6803 / Kazusa)).